The primary structure comprises 103 residues: Large ribosomal subunit protein bL21 (103 aa).

This sequence belongs to the bacterial ribosomal protein bL21 family. Part of the 50S ribosomal subunit. Contacts protein L20.

In terms of biological role, this protein binds to 23S rRNA in the presence of protein L20. The polypeptide is Large ribosomal subunit protein bL21 (Mycolicibacterium smegmatis (strain ATCC 700084 / mc(2)155) (Mycobacterium smegmatis)).